Here is a 352-residue protein sequence, read N- to C-terminus: N-terminal EF-hand calcium-binding protein 1 (352 aa).

The residue at position 4 (S4) is a Phosphoserine. EF-hand domains are found at residues 26–61 and 60–95; these read KGMSIFLDILRRADKNDDGKLSFEEFKAYFADGVLS and LSGEELHELFHTIDTHNTNNLDTEELCEYFSQHLGE. 5 residues coordinate Ca(2+): D39, N41, D43, K45, and E50. Residues 135 to 163 adopt a coiled-coil conformation; sequence LLKETLNQLQSLQNSLECAMETTEEQTRQ. A disordered region spans residues 180 to 202; sequence GKRSSRRVQRHNSFSPNSPQFNV. Polar residues predominate over residues 190–202; the sequence is HNSFSPNSPQFNV. Phosphoserine is present on residues S192 and S197. Positions 209–275 form a coiled coil; the sequence is EEDNQWMTQI…EEFQLALKHY (67 aa). One can recognise an ABM domain in the interval 252–340; it reads MLVQRQMSVI…LETPELTSTM (89 aa).

Interacts with STX1. May interact with CPNE6.

The protein resides in the cytoplasm. In Pongo abelii (Sumatran orangutan), this protein is N-terminal EF-hand calcium-binding protein 1 (NECAB1).